We begin with the raw amino-acid sequence, 335 residues long: Thioredoxin-related transmembrane protein 4 (335 aa).

A signal peptide spans 1–20 (MTGGFCVPVLLAAWLAAAAA). The region spanning 26–133 (AALPAEESRV…YEDLQNYILE (108 aa)) is the Thioredoxin domain. Active-site nucleophile residues include cysteine 60 and cysteine 63. Cysteine 60 and cysteine 63 are disulfide-bonded. Residues 186–206 (VFFVIATLVFGLFMGLILVVI) traverse the membrane as a helical segment. A disordered region spans residues 222–316 (CEQEQSTGEA…EDGAHPADTQ (95 aa)). The span at 238–280 (QDAEEEKDDSNEEENKDSLVDDEEEKEDIGDEDEGEEDEEEDN) shows a compositional bias: acidic residues. Serine 247 and serine 255 each carry phosphoserine. Residues 286-298 (AEERSDTNERAVV) show a composition bias toward basic and acidic residues.

The protein localises to the nucleus inner membrane. It localises to the endoplasmic reticulum membrane. In Mus musculus (Mouse), this protein is Thioredoxin-related transmembrane protein 4 (Tmx4).